Here is a 409-residue protein sequence, read N- to C-terminus: Putative kinase Y4dM (409 aa).

Asp293 acts as the Proton acceptor in catalysis.

The protein belongs to the HipA Ser/Thr kinase family.

This chain is Putative kinase Y4dM, found in Sinorhizobium fredii (strain NBRC 101917 / NGR234).